The sequence spans 587 residues: Arginine--tRNA ligase (587 aa).

The short motif at 127-137 is the 'HIGH' region element; sequence PNLAKEMHVGH.

It belongs to the class-I aminoacyl-tRNA synthetase family. In terms of assembly, monomer.

The protein localises to the cytoplasm. It carries out the reaction tRNA(Arg) + L-arginine + ATP = L-arginyl-tRNA(Arg) + AMP + diphosphate. This Pseudomonas aeruginosa (strain LESB58) protein is Arginine--tRNA ligase.